The chain runs to 405 residues: MSDITVANYHAFPDARGHFGRYGGRFVAETLIGPLQELAQAYDAARHDPDFIAAYNKDLKDYVGRPSPIYHAERLSRKVGGAQILLKREDLNHTGAHKINNTIGQALLAARMGKTRIIAETGAGQHGVASATVAARLGLECVVYMGATDIERQQINVYRMKLLGATVVPVTSGSATLKDALNEAMRDWVTHVGHTFYIIGTVAGPDPYPRMVRDFNAIVGREARAQMIEDYGRLPDAMTACVGGGSNAIGLFHAFLNDASVRIYGAEAAGDGIATGRHAASIVAGRPGVLHGNRTYVICDDDGQILETHSVSAGLDYPGVGPEHAFLADSGRVQYVGIRDEEALAAFHLLAHTEGILAALESSHAVAHAMTLARDLPKDALVLCNLSGRGDKDVHTIAAREGVRV.

At lysine 98 the chain carries N6-(pyridoxal phosphate)lysine.

This sequence belongs to the TrpB family. In terms of assembly, tetramer of two alpha and two beta chains. Pyridoxal 5'-phosphate is required as a cofactor.

It carries out the reaction (1S,2R)-1-C-(indol-3-yl)glycerol 3-phosphate + L-serine = D-glyceraldehyde 3-phosphate + L-tryptophan + H2O. The protein operates within amino-acid biosynthesis; L-tryptophan biosynthesis; L-tryptophan from chorismate: step 5/5. In terms of biological role, the beta subunit is responsible for the synthesis of L-tryptophan from indole and L-serine. This Xylella fastidiosa (strain M12) protein is Tryptophan synthase beta chain.